Consider the following 372-residue polypeptide: tRNA pseudouridine synthase D (372 aa).

Residue D85 is the Nucleophile of the active site. The region spanning 160-330 (GFANYFGYQR…MQGSRRFMWG (171 aa)) is the TRUD domain.

It belongs to the pseudouridine synthase TruD family.

It carries out the reaction uridine(13) in tRNA = pseudouridine(13) in tRNA. Functionally, responsible for synthesis of pseudouridine from uracil-13 in transfer RNAs. The sequence is that of tRNA pseudouridine synthase D from Campylobacter jejuni subsp. jejuni serotype O:6 (strain 81116 / NCTC 11828).